Consider the following 35-residue polypeptide: PTEN upstream open reading frame MP31 (35 aa).

As to quaternary structure, interacts with lactate dehydrogenases LDHA and LDHB; interaction with mitochondrial LDH leads to inhibition of lactate dehydrogenase activity, preventing conversion of lactate to pyruvate. As to expression, detected in brain, kidney and liver (at protein level).

It is found in the mitochondrion. Functionally, inhibits lactate dehydrogenase (LDH)-mediated conversion of lactate to pyruvate in mitochondria by competing with mitochondrial LDH for binding to NAD(+). Also inhibits cellular lactate utilization. The protein is PTEN upstream open reading frame MP31 of Mus musculus (Mouse).